The chain runs to 311 residues: Ribose-phosphate pyrophosphokinase (311 aa).

Residues 37-39 (DGE) and 96-97 (RQ) each bind ATP. Mg(2+) contacts are provided by histidine 130 and aspartate 170. Lysine 193 is an active-site residue. Residues arginine 195, aspartate 219, and 223-227 (DTAGT) contribute to the D-ribose 5-phosphate site.

The protein belongs to the ribose-phosphate pyrophosphokinase family. Class I subfamily. As to quaternary structure, homohexamer. Mg(2+) serves as cofactor.

The protein resides in the cytoplasm. The catalysed reaction is D-ribose 5-phosphate + ATP = 5-phospho-alpha-D-ribose 1-diphosphate + AMP + H(+). It functions in the pathway metabolic intermediate biosynthesis; 5-phospho-alpha-D-ribose 1-diphosphate biosynthesis; 5-phospho-alpha-D-ribose 1-diphosphate from D-ribose 5-phosphate (route I): step 1/1. Functionally, involved in the biosynthesis of the central metabolite phospho-alpha-D-ribosyl-1-pyrophosphate (PRPP) via the transfer of pyrophosphoryl group from ATP to 1-hydroxyl of ribose-5-phosphate (Rib-5-P). In Aquifex aeolicus (strain VF5), this protein is Ribose-phosphate pyrophosphokinase.